The chain runs to 115 residues: Large ribosomal subunit protein uL18 (115 aa).

It belongs to the universal ribosomal protein uL18 family. As to quaternary structure, part of the 50S ribosomal subunit; part of the 5S rRNA/L5/L18/L25 subcomplex. Contacts the 5S and 23S rRNAs.

Functionally, this is one of the proteins that bind and probably mediate the attachment of the 5S RNA into the large ribosomal subunit, where it forms part of the central protuberance. The polypeptide is Large ribosomal subunit protein uL18 (Mycoplasma genitalium (strain ATCC 33530 / DSM 19775 / NCTC 10195 / G37) (Mycoplasmoides genitalium)).